A 142-amino-acid polypeptide reads, in one-letter code: Secreted RxLR effector protein 161 (142 aa).

A signal peptide spans 1 to 27; sequence MKNVPYLSAVGAIMYLMVVTRPDLAAA. The short motif at 48–51 is the RxLR element; sequence RVLR.

Belongs to the RxLR effector family.

It is found in the secreted. It localises to the host chloroplast envelope. The protein resides in the host nucleus. In terms of biological role, secreted effector that completely suppresses the host cell death induced by cell death-inducing proteins. In Plasmopara viticola (Downy mildew of grapevine), this protein is Secreted RxLR effector protein 161.